We begin with the raw amino-acid sequence, 543 residues long: Chaperonin GroEL (543 aa).

Residues 29–32 (TLGP), Lys-50, 86–90 (DGTTT), Gly-415, and Asp-495 each bind ATP.

Belongs to the chaperonin (HSP60) family. In terms of assembly, forms a cylinder of 14 subunits composed of two heptameric rings stacked back-to-back. Interacts with the co-chaperonin GroES.

It localises to the cytoplasm. The catalysed reaction is ATP + H2O + a folded polypeptide = ADP + phosphate + an unfolded polypeptide.. Its function is as follows. Together with its co-chaperonin GroES, plays an essential role in assisting protein folding. The GroEL-GroES system forms a nano-cage that allows encapsulation of the non-native substrate proteins and provides a physical environment optimized to promote and accelerate protein folding. This is Chaperonin GroEL from Karelsulcia muelleri (strain GWSS) (Sulcia muelleri).